Consider the following 1273-residue polypeptide: Inverted formin-2 (1273 aa).

5 disordered regions span residues Met1–Leu30, Gly346–Pro387, Leu427–Gly559, Asn960–Lys999, and Lys1021–Gln1273. Ser2 bears the N-acetylserine mark. In terms of domain architecture, GBD/FH3 spans Ser2 to Gln330. A Phosphoserine modification is found at Ser351. Residues Ser359–Val382 are compositionally biased toward low complexity. Residues Pro421–Ser564 enclose the FH1 domain. Composition is skewed to pro residues over residues Val433 to Ser516 and Gln524 to Pro558. One can recognise an FH2 domain in the interval His589 to Glu979. Positions Glu907–Arg984 form a coiled coil. Positions Asp1007–Thr1022 constitute a WH2 domain. A compositionally biased stretch (polar residues) spans Ala1047–Pro1059. The segment covering Ser1088–Ser1101 has biased composition (basic and acidic residues). Phosphoserine occurs at positions 1172 and 1174. Residues Gly1195–Ala1204 show a composition bias toward acidic residues. Position 1203 is a phosphothreonine (Thr1203). Residues Ser1216 and Ser1218 each carry the phosphoserine modification. Thr1223 and Thr1230 each carry phosphothreonine. The span at Thr1242–Ser1251 shows a compositional bias: basic residues.

This sequence belongs to the formin homology family. Interacts with profilin and actin at the FH1 and FH2 domains respectively. Interacts with DAAM2.

It localises to the cytoplasm. It is found in the perinuclear region. With respect to regulation, phosphate inhibits both the depolymerization and severing activities. Functionally, severs actin filaments and accelerates their polymerization and depolymerization. This Mus musculus (Mouse) protein is Inverted formin-2 (Inf2).